The following is an 83-amino-acid chain: Cytochrome b559 subunit alpha (83 aa).

Residues V21–W35 form a helical membrane-spanning segment. Residue H23 coordinates heme.

It belongs to the PsbE/PsbF family. As to quaternary structure, heterodimer of an alpha subunit and a beta subunit. PSII is composed of 1 copy each of membrane proteins PsbA, PsbB, PsbC, PsbD, PsbE, PsbF, PsbH, PsbI, PsbJ, PsbK, PsbL, PsbM, PsbT, PsbX, PsbY, PsbZ, Psb30/Ycf12, at least 3 peripheral proteins of the oxygen-evolving complex and a large number of cofactors. It forms dimeric complexes. Requires heme b as cofactor.

It is found in the plastid. Its subcellular location is the chloroplast thylakoid membrane. Its function is as follows. This b-type cytochrome is tightly associated with the reaction center of photosystem II (PSII). PSII is a light-driven water:plastoquinone oxidoreductase that uses light energy to abstract electrons from H(2)O, generating O(2) and a proton gradient subsequently used for ATP formation. It consists of a core antenna complex that captures photons, and an electron transfer chain that converts photonic excitation into a charge separation. The sequence is that of Cytochrome b559 subunit alpha from Ginkgo biloba (Ginkgo).